Here is a 299-residue protein sequence, read N- to C-terminus: Probable arylamine N-acetyltransferase 2 (299 aa).

The active-site Acyl-thioester intermediate is C75. Catalysis depends on residues H115 and D130.

The protein belongs to the arylamine N-acetyltransferase family.

It catalyses the reaction an arylamine + acetyl-CoA = an N-acetylarylamine + CoA. The sequence is that of Probable arylamine N-acetyltransferase 2 from Dictyostelium discoideum (Social amoeba).